The sequence spans 290 residues: Virginiamycin B lyase (290 aa).

Histidine 226 serves as a coordination point for substrate. Glutamate 265 provides a ligand contact to Mg(2+). The Proton acceptor role is filled by histidine 267. Glutamate 282 contributes to the Mg(2+) binding site.

Belongs to the Vgb family. Monomer. The cofactor is Mg(2+).

Its function is as follows. Inactivates the type B streptogramin antibiotics by linearizing the lactone ring at the ester linkage, generating a free phenylglycine carboxylate and converting the threonyl moiety into 2-amino-butenoic acid. In Mycolicibacterium vanbaalenii (strain DSM 7251 / JCM 13017 / BCRC 16820 / KCTC 9966 / NRRL B-24157 / PYR-1) (Mycobacterium vanbaalenii), this protein is Virginiamycin B lyase.